A 643-amino-acid chain; its full sequence is Phosphatidylinositol-3,5-bisphosphate 3-phosphatase MTMR2 (643 aa).

Residues 1 to 52 (MEKSSSCESLGAQLPAARLPSEDSLSSASTSHSENSVHTKSASAISSDSIST) are disordered. Ser6 and Ser9 each carry phosphoserine. Residues 23–40 (DSLSSASTSHSENSVHTK) show a composition bias toward polar residues. A compositionally biased stretch (low complexity) spans 41–52 (SASAISSDSIST). Phosphoserine is present on Ser58. One can recognise a GRAM domain in the interval 68 to 139 (NKLAEMEEPA…GVISRVEKIG (72 aa)). The 376-residue stretch at 205–580 (GWKLYDPLLE…RHLELWVGYY (376 aa)) folds into the Myotubularin phosphatase domain. A 1,2-diacyl-sn-glycero-3-phospho-(1D-myo-inositol-3,5-bisphosphate) contacts are provided by Asn330, Asn355, and Ile356. Asn330, Asn355, and Ile356 together coordinate a 1,2-diacyl-sn-glycero-3-phospho-(1D-myo-inositol-3-phosphate). Cys417 acts as the Phosphocysteine intermediate in catalysis. Positions 418, 419, 420, 421, 422, 423, 459, and 463 each coordinate a 1,2-diacyl-sn-glycero-3-phospho-(1D-myo-inositol-3,5-bisphosphate). A 1,2-diacyl-sn-glycero-3-phospho-(1D-myo-inositol-3-phosphate)-binding residues include Ser418, Asp419, Gly420, Trp421, Asp422, and Arg423. Residue Arg463 coordinates a 1,2-diacyl-sn-glycero-3-phospho-(1D-myo-inositol-3-phosphate). Positions 593–627 (IHSRYKELLAKRAELQRKVEELQREISNRSTSSSE) form a coiled coil. The segment at 614 to 643 (LQREISNRSTSSSERASSPAQCVTPVQTVV) is disordered. Residues 620–631 (NRSTSSSERASS) show a composition bias toward low complexity. Polar residues predominate over residues 632–643 (PAQCVTPVQTVV).

It belongs to the protein-tyrosine phosphatase family. Non-receptor class myotubularin subfamily. Homodimer (via coiled-coil domain). Heterotetramer consisting of one MTMR2 dimer and one SBF2/MTMR13 dimer; specifically in peripheral nerves stabilizes SBF2/MTMR13 at the membranes and increases MTMR2 catalytic activity towards phosphatidylinositol 3,5-bisphosphate and to a lesser extent towards phosphatidylinositol 3-phosphate. Heterodimer with SBF1/MTMR5; acts as an adapter for the phosphatase MTMR2 to regulate MTMR2 catalytic activity and subcellular location. Heterodimer with MTMR12. Phosphorylation at Ser-58 decreases MTMR2 localization to endocytic vesicular structures. In terms of tissue distribution, expressed in sciatic nerve and in Schwann cells (at protein level). Detected in adult dorsal root ganglia, neurons of the central nervous system, motor neurons, cell soma and neurites of sensory neurons, olfactory bulb, cerebellum and hippocampus.

It is found in the cytoplasm. Its subcellular location is the early endosome membrane. The protein localises to the perinuclear region. The protein resides in the cell projection. It localises to the axon. It is found in the endosome membrane. The catalysed reaction is a 1,2-diacyl-sn-glycero-3-phospho-(1D-myo-inositol-3,5-bisphosphate) + H2O = a 1,2-diacyl-sn-glycero-3-phospho-(1D-myo-inositol-5-phosphate) + phosphate. It catalyses the reaction a 1,2-diacyl-sn-glycero-3-phospho-(1D-myo-inositol-3-phosphate) + H2O = a 1,2-diacyl-sn-glycero-3-phospho-(1D-myo-inositol) + phosphate. It carries out the reaction 1,2-dioctanoyl-sn-glycero-3-phospho-(1-D-myo-inositol-3-phosphate) + H2O = 1,2-dioctanoyl-sn-glycero-3-phospho-(1D-myo-inositol) + phosphate. The enzyme catalyses 1,2-dioctanoyl-sn-glycero-3-phospho-(1D-myo-inositol-3,5-bisphosphate) + H2O = 1,2-dioctanoyl-sn-glycero-3-phospho-(1D-myo-inositol-5-phosphate) + phosphate. Lipid phosphatase that specifically dephosphorylates the D-3 position of phosphatidylinositol 3-phosphate and phosphatidylinositol 3,5-bisphosphate, generating phosphatidylinositol and phosphatidylinositol 5-phosphate. Regulates the level of these phosphoinositides critical for various biological processes including autophagy initiation and autophagosome maturation. This is Phosphatidylinositol-3,5-bisphosphate 3-phosphatase MTMR2 from Mus musculus (Mouse).